A 271-amino-acid chain; its full sequence is Ribosomal RNA small subunit methyltransferase A (271 aa).

The S-adenosyl-L-methionine site is built by N19, L21, G46, E67, D92, and N114.

The protein belongs to the class I-like SAM-binding methyltransferase superfamily. rRNA adenine N(6)-methyltransferase family. RsmA subfamily.

It localises to the cytoplasm. It catalyses the reaction adenosine(1518)/adenosine(1519) in 16S rRNA + 4 S-adenosyl-L-methionine = N(6)-dimethyladenosine(1518)/N(6)-dimethyladenosine(1519) in 16S rRNA + 4 S-adenosyl-L-homocysteine + 4 H(+). Specifically dimethylates two adjacent adenosines (A1518 and A1519) in the loop of a conserved hairpin near the 3'-end of 16S rRNA in the 30S particle. May play a critical role in biogenesis of 30S subunits. The protein is Ribosomal RNA small subunit methyltransferase A of Aeromonas hydrophila subsp. hydrophila (strain ATCC 7966 / DSM 30187 / BCRC 13018 / CCUG 14551 / JCM 1027 / KCTC 2358 / NCIMB 9240 / NCTC 8049).